Consider the following 630-residue polypeptide: Lysophospholipase 3 (630 aa).

The first 16 residues, 1–16 (MKALLSLLTAVAVATA), serve as a signal peptide directing secretion. In terms of domain architecture, PLA2c spans 39–587 (SCPATRPSIR…KEYCWNGTVD (549 aa)). N56, N95, N164, N220, N283, N351, N390, N443, N456, N462, N493, N514, N542, N566, and N583 each carry an N-linked (GlcNAc...) asparagine glycan. N606 carries GPI-like-anchor amidated asparagine lipidation. Positions 607 to 630 (AAYTQGVTWLVGILAVGVAMGMTA) are cleaved as a propeptide — removed in mature form.

This sequence belongs to the lysophospholipase family. Post-translationally, the GPI-like anchor contains a phosphoceramide lipid group.

The protein localises to the cell membrane. It catalyses the reaction a 1-acyl-sn-glycero-3-phosphocholine + H2O = sn-glycerol 3-phosphocholine + a fatty acid + H(+). Its function is as follows. Catalyzes the release of fatty acids from lysophospholipids. The sequence is that of Lysophospholipase 3 (plb3) from Aspergillus fumigatus (strain CBS 144.89 / FGSC A1163 / CEA10) (Neosartorya fumigata).